Here is a 678-residue protein sequence, read N- to C-terminus: UvrABC system protein B (678 aa).

Residues 35 to 422 (EGVSDGLMFQ…ADNVVEQVVR (388 aa)) enclose the Helicase ATP-binding domain. An ATP-binding site is contributed by 48–55 (GVTGSGKT). A Beta-hairpin motif is present at residues 101–124 (YYDYYQPEAYVPTRDLFIEKDSSI). The Helicase C-terminal domain occupies 439 to 605 (QVDDLLGEIH…GVSKAVRELI (167 aa)). Residues 633-668 (AREIRRLEKLMMDHARNLEFEQAAAARDALNALKSR) enclose the UVR domain.

The protein belongs to the UvrB family. As to quaternary structure, forms a heterotetramer with UvrA during the search for lesions. Interacts with UvrC in an incision complex.

The protein localises to the cytoplasm. The UvrABC repair system catalyzes the recognition and processing of DNA lesions. A damage recognition complex composed of 2 UvrA and 2 UvrB subunits scans DNA for abnormalities. Upon binding of the UvrA(2)B(2) complex to a putative damaged site, the DNA wraps around one UvrB monomer. DNA wrap is dependent on ATP binding by UvrB and probably causes local melting of the DNA helix, facilitating insertion of UvrB beta-hairpin between the DNA strands. Then UvrB probes one DNA strand for the presence of a lesion. If a lesion is found the UvrA subunits dissociate and the UvrB-DNA preincision complex is formed. This complex is subsequently bound by UvrC and the second UvrB is released. If no lesion is found, the DNA wraps around the other UvrB subunit that will check the other stand for damage. This chain is UvrABC system protein B, found in Bordetella pertussis (strain Tohama I / ATCC BAA-589 / NCTC 13251).